The following is a 236-amino-acid chain: Small ribosomal subunit protein uS2c (236 aa).

Belongs to the universal ribosomal protein uS2 family.

It is found in the plastid. Its subcellular location is the chloroplast. The chain is Small ribosomal subunit protein uS2c (rps2) from Helianthus annuus (Common sunflower).